A 191-amino-acid polypeptide reads, in one-letter code: Thymidine kinase (191 aa).

Residues 15 to 22 (GPMYSGKT) and 88 to 91 (DEAQ) each bind ATP. Catalysis depends on Glu89, which acts as the Proton acceptor. Zn(2+)-binding residues include Cys145, Cys148, Cys183, and Cys186.

This sequence belongs to the thymidine kinase family. As to quaternary structure, homotetramer.

The protein resides in the cytoplasm. It catalyses the reaction thymidine + ATP = dTMP + ADP + H(+). This Clostridium botulinum (strain Hall / ATCC 3502 / NCTC 13319 / Type A) protein is Thymidine kinase.